We begin with the raw amino-acid sequence, 139 residues long: MPTINQLVSQGRKKKVWKTSSPALSLVYNSLNKKQTEIPAPFKRGVCTRVATMTPKKPNSALRKYARVKLSNGFEVTAYIPGEGHNIQEHSVVLIRGGRVKDLPGVRYTIVRGTQDAAGVANRNQSRSRYGTKKPKPKS.

Positions 118-139 (AGVANRNQSRSRYGTKKPKPKS) are disordered. A compositionally biased stretch (basic residues) spans 130 to 139 (YGTKKPKPKS).

This sequence belongs to the universal ribosomal protein uS12 family. Part of the 30S ribosomal subunit. Contacts proteins S8 and S17. May interact with IF1 in the 30S initiation complex.

Its function is as follows. With S4 and S5 plays an important role in translational accuracy. Functionally, interacts with and stabilizes bases of the 16S rRNA that are involved in tRNA selection in the A site and with the mRNA backbone. Located at the interface of the 30S and 50S subunits, it traverses the body of the 30S subunit contacting proteins on the other side and probably holding the rRNA structure together. The combined cluster of proteins S8, S12 and S17 appears to hold together the shoulder and platform of the 30S subunit. The polypeptide is Small ribosomal subunit protein uS12 (Mycoplasma mobile (strain ATCC 43663 / 163K / NCTC 11711) (Mesomycoplasma mobile)).